Here is a 116-residue protein sequence, read N- to C-terminus: Cysteine-rich venom protein Cau1 (116 aa).

Residues 4–42 form the SCP domain; sequence SYAVVGHYTQIVWYKSDRIGCAAAYCPSSVYNYFYVCQY. Intrachain disulfides connect C24-C40, C62-C69, C65-C74, C87-C105, and C96-C109. Positions 78-111 constitute a ShKT domain; that stretch reads CRVEDEFINCKDMAESRDCQDNYMMTNCAAFCSC.

This sequence belongs to the CRISP family. Expressed by the venom gland.

The protein resides in the secreted. Blocks contraction of smooth muscle elicited by high potassium-induced depolarization, but does not block caffeine-stimulated contraction. May target voltage-gated calcium channels on smooth muscle. The sequence is that of Cysteine-rich venom protein Cau1 from Causus rhombeatus (Rhombic night adder).